The following is a 354-amino-acid chain: UDP-3-O-acylglucosamine N-acyltransferase (354 aa).

Residue His247 is the Proton acceptor of the active site.

Belongs to the transferase hexapeptide repeat family. LpxD subfamily. As to quaternary structure, homotrimer.

The enzyme catalyses a UDP-3-O-[(3R)-3-hydroxyacyl]-alpha-D-glucosamine + a (3R)-hydroxyacyl-[ACP] = a UDP-2-N,3-O-bis[(3R)-3-hydroxyacyl]-alpha-D-glucosamine + holo-[ACP] + H(+). It participates in bacterial outer membrane biogenesis; LPS lipid A biosynthesis. In terms of biological role, catalyzes the N-acylation of UDP-3-O-acylglucosamine using 3-hydroxyacyl-ACP as the acyl donor. Is involved in the biosynthesis of lipid A, a phosphorylated glycolipid that anchors the lipopolysaccharide to the outer membrane of the cell. The protein is UDP-3-O-acylglucosamine N-acyltransferase of Chlamydia trachomatis serovar L2b (strain UCH-1/proctitis).